The primary structure comprises 111 residues: Denmotoxin (111 aa).

The first 19 residues, 1 to 19 (MKTLLLAVAVVAFVCLGSA), serve as a signal peptide directing secretion. Positions 20–34 (DQLGLGRQQIDWGQG) are excised as a propeptide. Residue glutamine 35 is modified to Pyrrolidone carboxylic acid. 5 cysteine pairs are disulfide-bonded: cysteine 44–cysteine 68, cysteine 47–cysteine 55, cysteine 61–cysteine 87, cysteine 91–cysteine 102, and cysteine 103–cysteine 108.

Monomer. In terms of tissue distribution, expressed by the venom gland.

The protein resides in the secreted. This bird-specific postsynaptic neurotoxin irreversibly binds and inhibits the chick muscle alpha-1-beta-1-gamma-delta (CHRNA1-CHRNB1-CHRNG-CHNRD) nicotinic acetylcholine receptor (nAChR) 100-fold more compared with the mouse receptor. The weak binding to mouse receptor is reversible. The sequence is that of Denmotoxin from Boiga dendrophila (Mangrove snake).